A 122-amino-acid polypeptide reads, in one-letter code: Acidic phospholipase A2 1 (122 aa).

7 disulfides stabilise this stretch: cysteine 26/cysteine 115, cysteine 28/cysteine 44, cysteine 43/cysteine 94, cysteine 49/cysteine 122, cysteine 50/cysteine 87, cysteine 57/cysteine 81, and cysteine 75/cysteine 85. Residues tyrosine 27, glycine 29, and glycine 31 each coordinate Ca(2+). The active site involves histidine 47. Position 48 (aspartate 48) interacts with Ca(2+). The active site involves aspartate 88.

It belongs to the phospholipase A2 family. Group II subfamily. D49 sub-subfamily. In terms of assembly, homodimer. It depends on Ca(2+) as a cofactor. As to expression, expressed by the venom gland.

The protein resides in the secreted. The catalysed reaction is a 1,2-diacyl-sn-glycero-3-phosphocholine + H2O = a 1-acyl-sn-glycero-3-phosphocholine + a fatty acid + H(+). PLA2 catalyzes the calcium-dependent hydrolysis of the 2-acyl groups in 3-sn-phosphoglycerides. The protein is Acidic phospholipase A2 1 of Protobothrops mucrosquamatus (Taiwan habu).